The primary structure comprises 482 residues: Glutamate--tRNA ligase 2 (482 aa).

A 'HIGH' region motif is present at residues 8–18 (PSPTGQLHIGG). The short motif at 249–253 (KLSKR) is the 'KMSKS' region element. Lys252 is an ATP binding site.

It belongs to the class-I aminoacyl-tRNA synthetase family. Glutamate--tRNA ligase type 1 subfamily. As to quaternary structure, monomer.

Its subcellular location is the cytoplasm. The catalysed reaction is tRNA(Glu) + L-glutamate + ATP = L-glutamyl-tRNA(Glu) + AMP + diphosphate. In terms of biological role, catalyzes the attachment of glutamate to tRNA(Glu) in a two-step reaction: glutamate is first activated by ATP to form Glu-AMP and then transferred to the acceptor end of tRNA(Glu). This chain is Glutamate--tRNA ligase 2, found in Caldicellulosiruptor saccharolyticus (strain ATCC 43494 / DSM 8903 / Tp8T 6331).